The chain runs to 129 residues: MADIIKQLEQEEIARLGKTIPSFAPGDTVVVGVNVVEGTRKRVQAYEGVVIAIRNRGLNSSFIVRKISSGEGVERTFQTYSPLIASIEVKRRGDVRRSKLYYLRERSGKSARIKEKLQLRAPKETSSAE.

It belongs to the bacterial ribosomal protein bL19 family.

Functionally, this protein is located at the 30S-50S ribosomal subunit interface and may play a role in the structure and function of the aminoacyl-tRNA binding site. This is Large ribosomal subunit protein bL19 from Methylobacillus flagellatus (strain ATCC 51484 / DSM 6875 / VKM B-1610 / KT).